A 120-amino-acid polypeptide reads, in one-letter code: NAD(P)H-quinone oxidoreductase subunit 3, chloroplastic (120 aa).

The next 3 membrane-spanning stretches (helical) occupy residues 10–30, 64–84, and 89–109; these read LWFF…ISEI, MFAL…PWAI, and LGIS…VGLV.

It belongs to the complex I subunit 3 family. In terms of assembly, NDH is composed of at least 16 different subunits, 5 of which are encoded in the nucleus.

Its subcellular location is the plastid. It localises to the chloroplast thylakoid membrane. The catalysed reaction is a plastoquinone + NADH + (n+1) H(+)(in) = a plastoquinol + NAD(+) + n H(+)(out). It carries out the reaction a plastoquinone + NADPH + (n+1) H(+)(in) = a plastoquinol + NADP(+) + n H(+)(out). Functionally, NDH shuttles electrons from NAD(P)H:plastoquinone, via FMN and iron-sulfur (Fe-S) centers, to quinones in the photosynthetic chain and possibly in a chloroplast respiratory chain. The immediate electron acceptor for the enzyme in this species is believed to be plastoquinone. Couples the redox reaction to proton translocation, and thus conserves the redox energy in a proton gradient. This chain is NAD(P)H-quinone oxidoreductase subunit 3, chloroplastic, found in Chara vulgaris (Common stonewort).